Consider the following 494-residue polypeptide: Glutamyl-tRNA(Gln) amidotransferase subunit A (494 aa).

Active-site charge relay system residues include K79 and S154. S178 (acyl-ester intermediate) is an active-site residue.

It belongs to the amidase family. GatA subfamily. As to quaternary structure, heterotrimer of A, B and C subunits.

The catalysed reaction is L-glutamyl-tRNA(Gln) + L-glutamine + ATP + H2O = L-glutaminyl-tRNA(Gln) + L-glutamate + ADP + phosphate + H(+). In terms of biological role, allows the formation of correctly charged Gln-tRNA(Gln) through the transamidation of misacylated Glu-tRNA(Gln) in organisms which lack glutaminyl-tRNA synthetase. The reaction takes place in the presence of glutamine and ATP through an activated gamma-phospho-Glu-tRNA(Gln). The sequence is that of Glutamyl-tRNA(Gln) amidotransferase subunit A from Clostridium kluyveri (strain NBRC 12016).